A 95-amino-acid polypeptide reads, in one-letter code: Glycophorin-C (95 aa).

Over 1-25 the chain is Extracellular; sequence MSSPVRTPPPERLEPNPGMSYAVME. The helical; Signal-anchor for type III membrane protein transmembrane segment at 26-46 threads the bilayer; that stretch reads IAIIAAVITAVALVLVCLLFL. The Cytoplasmic portion of the chain corresponds to 47–95; sequence MLRYLYRHKGTYYTNEAKGTEFAESADAALQSDPALQDAGDTSKKEYFI. Ser-71, Ser-78, and Ser-89 each carry phosphoserine.

Belongs to the glycophorin-C family.

It localises to the cell membrane. In Rattus norvegicus (Rat), this protein is Glycophorin-C (Gypc).